The chain runs to 187 residues: UPF0301 protein HSM_1900 (187 aa).

This sequence belongs to the UPF0301 (AlgH) family.

The polypeptide is UPF0301 protein HSM_1900 (Histophilus somni (strain 2336) (Haemophilus somnus)).